The primary structure comprises 424 residues: Probable threonylcarbamoyladenosine tRNA methylthiotransferase (424 aa).

The region spanning 1–106 (MRVAIETYGC…VVDAVYSALN (106 aa)) is the MTTase N-terminal domain. The [4Fe-4S] cluster site is built by Cys-10, Cys-44, Cys-73, Cys-143, Cys-147, and Cys-150. Positions 129–359 (LRENAIAIVS…TDLMRKIGLE (231 aa)) constitute a Radical SAM core domain. The region spanning 362–420 (KRFVGKKLRVLVTKEGKNGRNLARMNSYRAVVTEGAVGEFVEVKIKDCRFNYLIGQLAA) is the TRAM domain.

Belongs to the methylthiotransferase family. CDKAL1 subfamily. The cofactor is [4Fe-4S] cluster.

It carries out the reaction N(6)-L-threonylcarbamoyladenosine(37) in tRNA + (sulfur carrier)-SH + AH2 + 2 S-adenosyl-L-methionine = 2-methylsulfanyl-N(6)-L-threonylcarbamoyladenosine(37) in tRNA + (sulfur carrier)-H + 5'-deoxyadenosine + L-methionine + A + S-adenosyl-L-homocysteine + 2 H(+). Its function is as follows. Catalyzes the methylthiolation of N6-threonylcarbamoyladenosine (t(6)A), leading to the formation of 2-methylthio-N6-threonylcarbamoyladenosine (ms(2)t(6)A) at position 37 in tRNAs that read codons beginning with adenine. This is Probable threonylcarbamoyladenosine tRNA methylthiotransferase from Archaeoglobus fulgidus (strain ATCC 49558 / DSM 4304 / JCM 9628 / NBRC 100126 / VC-16).